The sequence spans 80 residues: Dermaseptin-DA3 (80 aa).

The first 22 residues, 1–22, serve as a signal peptide directing secretion; that stretch reads MAFLKKSLFLVLFLGLVSLSIC. Positions 23-42 are excised as a propeptide; sequence EEKRENEDEEEQEDDEQSEE. The interval 24-48 is disordered; that stretch reads EKRENEDEEEQEDDEQSEEKRGMWS. Over residues 29 to 40 the composition is skewed to acidic residues; that stretch reads EDEEEQEDDEQS. Leu77 bears the Leucine amide mark. A propeptide spanning residues 79–80 is cleaved from the precursor; sequence EQ.

The protein belongs to the frog skin active peptide (FSAP) family. Dermaseptin subfamily. As to expression, expressed by the skin glands.

It localises to the secreted. Possesses a potent antimicrobial activity against Gram-positive and Gram-negative bacteria. Probably acts by disturbing membrane functions with its amphipathic structure. This Agalychnis dacnicolor (Giant Mexican leaf frog) protein is Dermaseptin-DA3.